Consider the following 417-residue polypeptide: Delta-aminolevulinic acid dehydratase, chloroplastic (417 aa).

The N-terminal 40 residues, 1–40 (MAALLVPGGGAAPGLVWRRRRAAVQCAAASPSSPDPSWRT), are a transit peptide targeting the chloroplast. Positions 63–92 (VVSGNPPAAPAAPAKAKAPPGTPVVKPLRL) are disordered. Lys-286 (schiff-base intermediate with substrate) is an active-site residue. 5-aminolevulinate-binding residues include Arg-296 and Lys-308. Glu-324 serves as a coordination point for Mg(2+). The active-site Schiff-base intermediate with substrate is Lys-339. The 5-aminolevulinate site is built by Ser-365 and Tyr-404.

Belongs to the ALAD family. In terms of assembly, homooctamer. Requires Mg(2+) as cofactor.

The protein resides in the plastid. It is found in the chloroplast. The enzyme catalyses 2 5-aminolevulinate = porphobilinogen + 2 H2O + H(+). The protein operates within porphyrin-containing compound metabolism; protoporphyrin-IX biosynthesis; coproporphyrinogen-III from 5-aminolevulinate: step 1/4. Catalyzes an early step in the biosynthesis of tetrapyrroles. Binds two molecules of 5-aminolevulinate per subunit, each at a distinct site, and catalyzes their condensation to form porphobilinogen. This chain is Delta-aminolevulinic acid dehydratase, chloroplastic (HEMB), found in Selaginella martensii (Martens's spike moss).